The following is a 615-amino-acid chain: MIKKVSLMTALSVTAFSGWAQDSADSLVVTANRFEQPANTVLAPTSVVTREDIERWQSTTVLDVMRRLPGVDTAQNGGMGQASSLFVRGTNSSHVLILVDGIRLNQAGVTGSSDLSQFPISLVQRIEYIRGPRSAVYGSDAIGGVVNIITTRAKDGTTLNAGVGSHGYQNYGGSTQQTLGDNTRVTLAGDYTYTKGFDVVADGNNGGLAQTDRDGYMNKTIYGALEHAFSDQWSGFVRGFGYSNRTAYDAYYSSFTPDVLVDTRQLYSQTWDTGLRFNDGIFHSQLLSSYSHSKDYNYDPHLGRYDSTATLDEIKQYNVQWTNSVDVGHGNVGAGVDWQKQSTEPGTNYVTNDTNLRNTGVYLTALQKFGDFTLEGAARSDDNSQFGRHGTWQSSAAWEFIEGYRFIASYGTAYKAPNLGQLYGFYGNDHLNPEESKQWEGAFEGLTAGVSWRVSAYRNDVDNLIDFDSNLQQYYNVGKARIKGVEATASFDTGPLTHTVGYDYVDARNAATNELLDRRAKQQVKYQLDTQVYDFDWSLTYHYLGTRYDTDFGSYPYQKVKMGGVSLWDLAVSYPVTSHLTVRGKIANLFDKDYETVYGYETAGREYTLSGSYTF.

A signal peptide spans 1–20; the sequence is MIKKVSLMTALSVTAFSGWA. A TonB box motif is present at residues 25–32; that stretch reads DSLVVTAN. A TBDR plug domain is found at 37–151; the sequence is PANTVLAPTS…IGGVVNIITT (115 aa). Cyanocob(III)alamin is bound by residues Ser-84, Asn-91, and 109–110; that span reads VT. Residues 154 to 615 form the TBDR beta-barrel domain; it reads KDGTTLNAGV…EYTLSGSYTF (462 aa). A run of 3 beta stranded transmembrane segments spans residues 157-164, 168-177, and 183-194; these read TTLNAGVG, YQNYGGSTQQ, and TRVTLAGDYTYT. Residues Asp-198, Gln-210, Asp-212, and Asp-214 each coordinate Ca(2+). Beta stranded transmembrane passes span 216-226 and 231-247; these read YMNKTIYGALE and DQWSGFVRGFGYSNRTA. 2 residues coordinate Ca(2+): Tyr-248 and Asp-249. Ala-250 is a cyanocob(III)alamin binding site. Asp-262 lines the Ca(2+) pocket. Transmembrane regions (beta stranded) follow at residues 264-278, 280-297, 310-326, 329-338, 354-370, 372-382, 386-401, 404-418, 435-444, 450-459, 474-491, 495-510, 518-530, 536-551, 559-573, 586-597, and 603-615; these read RQLYSQTWDTGLRFN, GIFHSQLLSSYSHSKDYN, TLDEIKQYNVQWTNSVD, HGNVGAGVDW, TNLRNTGVYLTALQKFG, FTLEGAARSDD, FGRHGTWQSSAAWEFI, YRFIASYGTAYKAPN, ESKQWEGAFE, VSWRVSAYRN, YYNVGKARIKGVEATASF, PLTHTVGYDYVDARNA, RRAKQQVKYQLDT, DWSLTYHYLGTRYDTD, KVKMGGVSLWDLAVS, IANLFDKDYETV, and AGREYTLSGSYTF. A cyanocob(III)alamin-binding site is contributed by Thr-310. Cyanocob(III)alamin is bound at residue Arg-518. The short motif at 598–615 is the TonB C-terminal box element; the sequence is YGYETAGREYTLSGSYTF.

Belongs to the TonB-dependent receptor family. BtuB (TC 1.B.14.3.1) subfamily.

It is found in the cell outer membrane. Involved in the active translocation of vitamin B12 (cyanocobalamin) across the outer membrane to the periplasmic space. It derives its energy for transport by interacting with the trans-periplasmic membrane protein TonB. This Enterobacter sp. (strain 638) protein is Vitamin B12 transporter BtuB.